The following is a 452-amino-acid chain: General transcription and DNA repair factor IIH subunit TFB2 (452 aa).

Belongs to the TFB2 family. Component of the 7-subunit TFIIH core complex composed of XPB, XPD, TFB1/GTF2H1, GTF2H2/P44, TFB4/GTF2H3, TFB2/GTF2H4 and TFB5/GTF2H5, which is active in NER. The core complex associates with the 3-subunit CDK-activating kinase (CAK) module composed of CYCH1/cyclin H1, CDKD and MAT1/At4g30820 to form the 10-subunit holoenzyme (holo-TFIIH) active in transcription.

Its subcellular location is the nucleus. Functionally, component of the general transcription and DNA repair factor IIH (TFIIH) core complex, which is involved in general and transcription-coupled nucleotide excision repair (NER) of damaged DNA and, when complexed to CAK, in RNA transcription by RNA polymerase II. In NER, TFIIH acts by opening DNA around the lesion to allow the excision of the damaged oligonucleotide and its replacement by a new DNA fragment. In transcription, TFIIH has an essential role in transcription initiation. When the pre-initiation complex (PIC) has been established, TFIIH is required for promoter opening and promoter escape. Phosphorylation of the C-terminal tail (CTD) of the largest subunit of RNA polymerase II by the kinase module CAK controls the initiation of transcription. The chain is General transcription and DNA repair factor IIH subunit TFB2 from Arabidopsis thaliana (Mouse-ear cress).